Reading from the N-terminus, the 30-residue chain is Photosystem I reaction center subunit XII (30 aa).

The helical transmembrane segment at 7–29 (IYTVLCIALLAGILAIRLGSTLY) threads the bilayer.

It belongs to the PsaM family.

The protein localises to the plastid. Its subcellular location is the chloroplast thylakoid membrane. The chain is Photosystem I reaction center subunit XII from Phaeodactylum tricornutum (strain CCAP 1055/1).